Consider the following 303-residue polypeptide: Methionyl-tRNA formyltransferase (303 aa).

108-111 (SDLP) is a binding site for (6S)-5,6,7,8-tetrahydrofolate.

This sequence belongs to the Fmt family.

The catalysed reaction is L-methionyl-tRNA(fMet) + (6R)-10-formyltetrahydrofolate = N-formyl-L-methionyl-tRNA(fMet) + (6S)-5,6,7,8-tetrahydrofolate + H(+). In terms of biological role, attaches a formyl group to the free amino group of methionyl-tRNA(fMet). The formyl group appears to play a dual role in the initiator identity of N-formylmethionyl-tRNA by promoting its recognition by IF2 and preventing the misappropriation of this tRNA by the elongation apparatus. The sequence is that of Methionyl-tRNA formyltransferase from Rickettsia prowazekii (strain Madrid E).